A 243-amino-acid polypeptide reads, in one-letter code: MMNALGLSVAATSTGSPFHDVCCYGAGIAGNIFALVLFISPLPTFKRIVRNGSTEQFSAMPYIYSLLNCLICLWYGLPFVSYGVVLVATVNSIGALFQLAYTATFIAFADAKNRVKVSSLLVMVFGVFALIVYVSLALFDHQTRQLFVGYLSVASLIFMFASPLSIINLVIRTKSVEYMPFYLSLSMFLMSVSFFAYGVLLHDFFIYIPNGIGTVLGVIQLVLYGYFRKGSREDSLPLLVTHT.

The signal sequence occupies residues 1 to 15; that stretch reads MMNALGLSVAATSTG. At 16 to 24 the chain is on the extracellular side; that stretch reads SPFHDVCCY. A helical membrane pass occupies residues 25–45; the sequence is GAGIAGNIFALVLFISPLPTF. Residues 27-112 enclose the MtN3/slv 1 domain; the sequence is GIAGNIFALV…ATFIAFADAK (86 aa). The Cytoplasmic portion of the chain corresponds to 46 to 56; that stretch reads KRIVRNGSTEQ. A helical membrane pass occupies residues 57–79; that stretch reads FSAMPYIYSLLNCLICLWYGLPF. The Extracellular segment spans residues 80–90; that stretch reads VSYGVVLVATV. The helical transmembrane segment at 91–111 threads the bilayer; the sequence is NSIGALFQLAYTATFIAFADA. Topologically, residues 112–118 are cytoplasmic; sequence KNRVKVS. The helical transmembrane segment at 119–139 threads the bilayer; that stretch reads SLLVMVFGVFALIVYVSLALF. The Extracellular portion of the chain corresponds to 140 to 146; it reads DHQTRQL. A helical membrane pass occupies residues 147–167; the sequence is FVGYLSVASLIFMFASPLSII. Positions 147–229 constitute a MtN3/slv 2 domain; sequence FVGYLSVASL…QLVLYGYFRK (83 aa). At 168–180 the chain is on the cytoplasmic side; sequence NLVIRTKSVEYMP. A helical transmembrane segment spans residues 181–201; sequence FYLSLSMFLMSVSFFAYGVLL. Over 202-203 the chain is Extracellular; the sequence is HD. Residues 204 to 224 traverse the membrane as a helical segment; the sequence is FFIYIPNGIGTVLGVIQLVLY. Residues 225-243 are Cytoplasmic-facing; it reads GYFRKGSREDSLPLLVTHT.

It belongs to the SWEET sugar transporter family. In terms of assembly, forms homooligomers and/or heterooligomers.

It localises to the cell membrane. Mediates both low-affinity uptake and efflux of sugar across the plasma membrane. This is Bidirectional sugar transporter SWEET2a (SWEET2A) from Oryza sativa subsp. indica (Rice).